Here is a 327-residue protein sequence, read N- to C-terminus: D-threonate 4-phosphate dehydrogenase (327 aa).

Residues His139 and Thr140 each coordinate substrate. A divalent metal cation is bound by residues His169, His213, and His268. The substrate site is built by Lys276, Asn285, and Arg294.

It belongs to the PdxA family. PdxA2 subfamily. In terms of assembly, homodimer. It depends on a divalent metal cation as a cofactor.

It carries out the reaction 4-O-phospho-D-threonate + NAD(+) = dihydroxyacetone phosphate + CO2 + NADH. In terms of biological role, catalyzes the NAD-dependent oxidation and subsequent decarboxylation of D-threonate 4-phosphate to produce dihydroxyacetone phosphate (DHAP). Can also use 4-hydroxy-L-threonine 4-phosphate as substrate. This is D-threonate 4-phosphate dehydrogenase from Salmonella typhimurium (strain LT2 / SGSC1412 / ATCC 700720).